The primary structure comprises 200 residues: 3-isopropylmalate dehydratase small subunit 2 (200 aa).

This sequence belongs to the LeuD family. LeuD type 1 subfamily. Heterodimer of LeuC and LeuD.

It carries out the reaction (2R,3S)-3-isopropylmalate = (2S)-2-isopropylmalate. It participates in amino-acid biosynthesis; L-leucine biosynthesis; L-leucine from 3-methyl-2-oxobutanoate: step 2/4. Catalyzes the isomerization between 2-isopropylmalate and 3-isopropylmalate, via the formation of 2-isopropylmaleate. In Mannheimia succiniciproducens (strain KCTC 0769BP / MBEL55E), this protein is 3-isopropylmalate dehydratase small subunit 2.